The chain runs to 284 residues: Nucleotide-binding protein in ptsO 5'region (284 aa).

Residue 8–15 coordinates ATP; it reads GRSGSGKS. 60–63 serves as a coordination point for GTP; that stretch reads DARN.

It belongs to the RapZ-like family.

In terms of biological role, displays ATPase and GTPase activities. This is Nucleotide-binding protein in ptsO 5'region from Pseudomonas putida (Arthrobacter siderocapsulatus).